The following is a 137-amino-acid chain: Large ribosomal subunit protein uL16 (137 aa).

The protein belongs to the universal ribosomal protein uL16 family. Part of the 50S ribosomal subunit.

Binds 23S rRNA and is also seen to make contacts with the A and possibly P site tRNAs. The polypeptide is Large ribosomal subunit protein uL16 (Methylobacterium sp. (strain 4-46)).